Consider the following 102-residue polypeptide: Urease subunit beta (102 aa).

The protein belongs to the urease beta subunit family. As to quaternary structure, heterotrimer of UreA (gamma), UreB (beta) and UreC (alpha) subunits. Three heterotrimers associate to form the active enzyme.

It is found in the cytoplasm. It carries out the reaction urea + 2 H2O + H(+) = hydrogencarbonate + 2 NH4(+). Its pathway is nitrogen metabolism; urea degradation; CO(2) and NH(3) from urea (urease route): step 1/1. This is Urease subunit beta from Methylibium petroleiphilum (strain ATCC BAA-1232 / LMG 22953 / PM1).